Consider the following 529-residue polypeptide: Peptide chain release factor 3 (529 aa).

Positions 11-280 (AKRRTFAIIS…GLVEWAPAPM (270 aa)) constitute a tr-type G domain. GTP-binding positions include 20-27 (SHPDAGKT), 88-92 (DTPGH), and 142-145 (NKLD).

This sequence belongs to the TRAFAC class translation factor GTPase superfamily. Classic translation factor GTPase family. PrfC subfamily.

It localises to the cytoplasm. In terms of biological role, increases the formation of ribosomal termination complexes and stimulates activities of RF-1 and RF-2. It binds guanine nucleotides and has strong preference for UGA stop codons. It may interact directly with the ribosome. The stimulation of RF-1 and RF-2 is significantly reduced by GTP and GDP, but not by GMP. The protein is Peptide chain release factor 3 of Salmonella arizonae (strain ATCC BAA-731 / CDC346-86 / RSK2980).